Here is an 889-residue protein sequence, read N- to C-terminus: Serine/threonine-protein kinase D3 (889 aa).

A phosphoserine mark is found at Ser-27, Ser-37, Ser-41, and Ser-44. The segment at 154-204 adopts a Phorbol-ester/DAG-type 1 zinc-finger fold; it reads PHALYVHSYKAPTFCDYCGEMLWGLVRQGLKCEGCGLNYHKRCAFKIPNNC. Phosphoserine is present on residues Ser-213 and Ser-216. The Phorbol-ester/DAG-type 2 zinc finger occupies 271-321; that stretch reads PHTFAVHSYGRPTICQYCKRLLKGLFRQGMQCKDCKFNCHKRCASKVPRDC. Residues 336–370 are disordered; the sequence is TDADMPMDIDSSDVNSDGSRGLDDSEEPSPPEDKM. Phosphoserine occurs at positions 346, 391, and 395. Residues 416-532 form the PH domain; that stretch reads TVVKEGWMVH…WEKAIRQALM (117 aa). Residue Tyr-426 is modified to Phosphotyrosine. Ser-442 bears the Phosphoserine mark. Residue Tyr-457 is modified to Phosphotyrosine. Phosphothreonine is present on Thr-535. The residue at position 539 (Ser-539) is a Phosphoserine. In terms of domain architecture, Protein kinase spans 575-831; the sequence is IFADEVLGSG…VDKSLSHPWL (257 aa). Residues 581-589 and Lys-604 each bind ATP; that span reads LGSGQFGIV. Asp-698 (proton acceptor) is an active-site residue. Ser-730 carries the post-translational modification Phosphoserine; by PKC. Ser-734 carries the post-translational modification Phosphoserine; by autocatalysis. At Tyr-741 the chain carries Phosphotyrosine.

Belongs to the protein kinase superfamily. CAMK Ser/Thr protein kinase family. PKD subfamily. Mg(2+) serves as cofactor.

Its subcellular location is the cytoplasm. The protein localises to the membrane. The enzyme catalyses L-seryl-[protein] + ATP = O-phospho-L-seryl-[protein] + ADP + H(+). It catalyses the reaction L-threonyl-[protein] + ATP = O-phospho-L-threonyl-[protein] + ADP + H(+). Its activity is regulated as follows. Activated by DAG and phorbol esters. Phorbol-ester/DAG-type domains 1 and 2 bind both DAG and phorbol ester with high affinity and mediate translocation to the cell membrane. Autophosphorylation of Ser-734 and phosphorylation of Ser-730 by PKC relieves auto-inhibition by the PH domain. Functionally, converts transient diacylglycerol (DAG) signals into prolonged physiological effects, downstream of PKC. Involved in resistance to oxidative stress. The protein is Serine/threonine-protein kinase D3 (Prkd3) of Mus musculus (Mouse).